A 579-amino-acid polypeptide reads, in one-letter code: Zinc finger-containing ubiquitin peptidase 1 (579 aa).

Residues 2-25 (LSCDICGETVSSEPDMKAHLLIVH) form a C2H2-type 1 zinc finger. A C2H2-type 2; atypical zinc finger spans residues 30–53 (VICPFCKLSGVNYDEMCFHIETAH). 2 C2H2-type zinc fingers span residues 155-178 (PECPFCGKIEDNSQDMETHVKTKH) and 194-216 (YDCPMCGLVCTNYHILQEHVDLH). The MIU stretch occupies residues 227 to 249 (NRVQCSRDLELAQQLQQEEDRKR). The segment at 250-275 (RSEESRQEMEEFQKLQRQYGLDNSGG) is zUBD/ZHA. Lysine 263 carries the N6-acetyllysine modification. Cysteine 361 functions as the Nucleophile in the catalytic mechanism. Histidine 492 (proton acceptor) is an active-site residue. The active site involves aspartate 513.

The protein belongs to the peptidase C78 family. ZUFSP subfamily. As to quaternary structure, interacts with RPA1 and RPA2.

Its subcellular location is the cytoplasm. The protein resides in the nucleus. It carries out the reaction Thiol-dependent hydrolysis of ester, thioester, amide, peptide and isopeptide bonds formed by the C-terminal Gly of ubiquitin (a 76-residue protein attached to proteins as an intracellular targeting signal).. Its function is as follows. Deubiquitinase with endodeubiquitinase activity that specifically interacts with and cleaves 'Lys-63'-linked long polyubiquitin chains. Shows only weak activity against 'Lys-11' and 'Lys-48'-linked chains. Plays an important role in genome stability pathways, functioning to prevent spontaneous DNA damage and also promote cellular survival in response to exogenous DNA damage. Modulates the ubiquitination status of replication protein A (RPA) complex proteins in response to replication stress. This chain is Zinc finger-containing ubiquitin peptidase 1, found in Bos taurus (Bovine).